A 451-amino-acid chain; its full sequence is 23S rRNA (uracil(1939)-C(5))-methyltransferase RlmD (451 aa).

Positions 1-21 (MAKHERGLRFQPTGGVKSVQI) are disordered. One can recognise a TRAM domain in the interval 20 to 78 (QIPAGKKQRLSIERLSDDGRGIAFLEGKTWFVAGSLAGEEVEARVLNARGKVVEARTER). [4Fe-4S] cluster-binding residues include Cys91, Cys97, Cys100, and Cys179. Residues Gln283, Phe312, Asn317, Glu333, Asp360, and Asp381 each coordinate S-adenosyl-L-methionine. Catalysis depends on Cys407, which acts as the Nucleophile.

This sequence belongs to the class I-like SAM-binding methyltransferase superfamily. RNA M5U methyltransferase family. RlmD subfamily.

The enzyme catalyses uridine(1939) in 23S rRNA + S-adenosyl-L-methionine = 5-methyluridine(1939) in 23S rRNA + S-adenosyl-L-homocysteine + H(+). In terms of biological role, catalyzes the formation of 5-methyl-uridine at position 1939 (m5U1939) in 23S rRNA. The polypeptide is 23S rRNA (uracil(1939)-C(5))-methyltransferase RlmD (Pseudomonas syringae pv. tomato (strain ATCC BAA-871 / DC3000)).